The chain runs to 374 residues: uncharacterized protein (374 aa).

The disordered stretch occupies residues 197-223; the sequence is GTTTTTNNNNNNNNNNNNNNNNGTNIT. Positions 198–223 are enriched in low complexity; it reads TTTTTNNNNNNNNNNNNNNNNGTNIT. Residues 302–342 adopt a coiled-coil conformation; that stretch reads DEVSDCNDINTNLKKKRKQQEQLQIEKEKKLLTIQQEQTKI.

This is an uncharacterized protein from Dictyostelium discoideum (Social amoeba).